Reading from the N-terminus, the 275-residue chain is Large ribosomal subunit protein uL2c (275 aa).

The interval 225 to 275 is disordered; sequence MNPCDHPHGGGEGRSPIGRPRPVSPWGKPALGQRTRKGHKYSDQMILRRRK.

It belongs to the universal ribosomal protein uL2 family. Part of the 50S ribosomal subunit.

The protein resides in the plastid. The protein localises to the chloroplast. The protein is Large ribosomal subunit protein uL2c (rpl2) of Oltmannsiellopsis viridis (Marine flagellate).